The chain runs to 156 residues: Transcription elongation factor GreA (156 aa).

Positions 2–78 (AKEIILTQEG…MISKAKLIED (77 aa)) form a coiled coil.

The protein belongs to the GreA/GreB family.

Its function is as follows. Necessary for efficient RNA polymerase transcription elongation past template-encoded arresting sites. The arresting sites in DNA have the property of trapping a certain fraction of elongating RNA polymerases that pass through, resulting in locked ternary complexes. Cleavage of the nascent transcript by cleavage factors such as GreA or GreB allows the resumption of elongation from the new 3'terminus. GreA releases sequences of 2 to 3 nucleotides. The polypeptide is Transcription elongation factor GreA (Mesoplasma florum (strain ATCC 33453 / NBRC 100688 / NCTC 11704 / L1) (Acholeplasma florum)).